The primary structure comprises 300 residues: Lipoyl synthase 2 (300 aa).

[4Fe-4S] cluster contacts are provided by Cys46, Cys51, Cys57, Cys72, Cys76, Cys79, and Ser294. One can recognise a Radical SAM core domain in the interval 58-283 (YAQKTATFLL…GKLAREMGFS (226 aa)).

Belongs to the radical SAM superfamily. Lipoyl synthase family. It depends on [4Fe-4S] cluster as a cofactor.

The protein localises to the cytoplasm. It carries out the reaction [[Fe-S] cluster scaffold protein carrying a second [4Fe-4S](2+) cluster] + N(6)-octanoyl-L-lysyl-[protein] + 2 oxidized [2Fe-2S]-[ferredoxin] + 2 S-adenosyl-L-methionine + 4 H(+) = [[Fe-S] cluster scaffold protein] + N(6)-[(R)-dihydrolipoyl]-L-lysyl-[protein] + 4 Fe(3+) + 2 hydrogen sulfide + 2 5'-deoxyadenosine + 2 L-methionine + 2 reduced [2Fe-2S]-[ferredoxin]. It participates in protein modification; protein lipoylation via endogenous pathway; protein N(6)-(lipoyl)lysine from octanoyl-[acyl-carrier-protein]: step 2/2. Its function is as follows. Catalyzes the radical-mediated insertion of two sulfur atoms into the C-6 and C-8 positions of the octanoyl moiety bound to the lipoyl domains of lipoate-dependent enzymes, thereby converting the octanoylated domains into lipoylated derivatives. This Nostoc sp. (strain PCC 7120 / SAG 25.82 / UTEX 2576) protein is Lipoyl synthase 2.